We begin with the raw amino-acid sequence, 297 residues long: MNTIVMQADKKLQEKIRTDLAQHHISNNNPYVVFSAKISGTTVLLYTSGKLVFQGSNASHIAQKYGYIEQKESCSSETQDIPIIGTDEVGNGSYFGGLAVVASFVTPKDHAYLKKLGVGDSKTLTDQKIKQIAPLLEKAIPHKALLLSPQKYNQVVGPNNKHNAVSVKVALHNQAIFLLLQDGFEPEKIVIDAFTSSKNYQNYLKNEKNQFKQTITLEEKAENKYLAVAVSSIIARNLFLENLNKLSDDVGYKLPSGAGHQSDKVASQLLKAYGISSLEHCAKLHFANTKKAQALLK.

Positions 81-297 constitute an RNase H type-2 domain; it reads IPIIGTDEVG…NTKKAQALLK (217 aa). A divalent metal cation is bound by residues Asp87, Glu88, and Asp192.

The protein belongs to the RNase HII family. RnhC subfamily. It depends on Mn(2+) as a cofactor. Requires Mg(2+) as cofactor.

It is found in the cytoplasm. It catalyses the reaction Endonucleolytic cleavage to 5'-phosphomonoester.. Its function is as follows. Endonuclease that specifically degrades the RNA of RNA-DNA hybrids. This Streptococcus agalactiae serotype III (strain NEM316) protein is Ribonuclease HIII.